The chain runs to 940 residues: Phosphoenolpyruvate carboxylase (940 aa).

Active-site residues include His-138 and Lys-603.

It belongs to the PEPCase type 1 family. Mg(2+) is required as a cofactor.

The catalysed reaction is oxaloacetate + phosphate = phosphoenolpyruvate + hydrogencarbonate. In terms of biological role, forms oxaloacetate, a four-carbon dicarboxylic acid source for the tricarboxylic acid cycle. The protein is Phosphoenolpyruvate carboxylase of Streptococcus thermophilus (strain ATCC BAA-491 / LMD-9).